The primary structure comprises 243 residues: MARKGPKRHLKRLAAPTSWYIHRKAYKWAVRPSPGPHSMKTSIPLIYIVRDYLGYAKTAREARKILNEGKILVDGRVRKDYKFPVGIMDVVSIPETGEHYRVLPNRIGKLILHPISEEEAKLKPFRINNKRMVKGAKVQLNLHDGSNHLVSLAEKDAYKTSYTVIMQVPERQIVKVLPFEVGAYVFVTQGKNVARKGKIVEVRQFPMGWPDVVTIEDENGELFDTLKEYAFVIGKDKPEISLP.

Residues 43 to 105 (IPLIYIVRDY…TGEHYRVLPN (63 aa)) form the S4 RNA-binding domain.

It belongs to the eukaryotic ribosomal protein eS4 family. As to quaternary structure, part of the 30S ribosomal subunit.

The polypeptide is Small ribosomal subunit protein eS4 (Thermococcus kodakarensis (strain ATCC BAA-918 / JCM 12380 / KOD1) (Pyrococcus kodakaraensis (strain KOD1))).